We begin with the raw amino-acid sequence, 472 residues long: Serine incorporator 3 (472 aa).

At 1–96 (MGAVLGVFSL…KDCDVLVGFK (96 aa)) the chain is on the extracellular side. Asparagine 34 carries N-linked (GlcNAc...) asparagine glycosylation. Residues 97 to 117 (AVYRINFAVAIFFFAFFLLML) form a helical membrane-spanning segment. The Cytoplasmic portion of the chain corresponds to 118–132 (KVKTSKDPRAAVHNG). Residues 133–153 (FWFFKIAAIIGIMIGSFYIPG) traverse the membrane as a helical segment. Topologically, residues 154–158 (GSFTE) are extracellular. Residues 159 to 179 (VWFVAGMLGASFFIIIQLVLL) traverse the membrane as a helical segment. Residues 180-206 (VDMAHSWNELWVNRMEEGNPRLWYAAL) are Cytoplasmic-facing. A helical membrane pass occupies residues 207–227 (LSFTSLFYILSIVFAALLYVF). Residues 228 to 238 (YTKPDDCTENK) are Extracellular-facing. The chain crosses the membrane as a helical span at residues 239-259 (VFISLNLIFCVAVSIVSILPK). Residues 260-329 (VQEHQPRSGL…APAYAPPSQS (70 aa)) lie on the Cytoplasmic side of the membrane. The chain crosses the membrane as a helical span at residues 330-350 (GHFMNLDDIWGLIIFVFCLIY). At 351-405 (SSFRTSSNSQVNKLTLSGSDSVILGDTTNGANDEEDGQPRRAVDNEKEGVQYSYS) the chain is on the extracellular side. The residue at position 371 (serine 371) is a Phosphoserine. Residues 406-426 (FFHLMLCCASLYIMMTITSWY) form a helical membrane-spanning segment. Residues 427–445 (SPDAKFQKVSSKWLAVWFK) are Cytoplasmic-facing. Residues 446-466 (MGSSWLCLLLYLWTLVAPLVL) form a helical membrane-spanning segment. The Extracellular portion of the chain corresponds to 467–472 (TGRDFS).

It belongs to the TDE1 family. N-glycosylated. Highly expressed in the neuronal populations such as Purkinje cells in the cerebellum, brainstem and spinal motor neurons, locus coeruleus and raphe nuclei. Highly expressed also in thymus, kidney liver and testis.

Its subcellular location is the cell membrane. The protein resides in the golgi apparatus membrane. It catalyses the reaction a 1,2-diacyl-sn-glycero-3-phospho-L-serine(in) = a 1,2-diacyl-sn-glycero-3-phospho-L-serine(out). The enzyme catalyses a 1,2-diacyl-sn-glycero-3-phosphocholine(in) = a 1,2-diacyl-sn-glycero-3-phosphocholine(out). The catalysed reaction is a 1,2-diacyl-sn-glycero-3-phosphoethanolamine(in) = a 1,2-diacyl-sn-glycero-3-phosphoethanolamine(out). Its function is as follows. Restriction factor required to restrict infectivity of gammaretroviruses: acts by inhibiting an early step of viral infection. Impairs the penetration of the viral particle into the cytoplasm. Non-ATP-dependent, non-specific lipid transporter for phosphatidylserine, phosphatidylcholine, and phosphatidylethanolamine. Functions as a scramblase that flips lipids in both directions across the membrane. Phospholipid scrambling results in gammaretroviral surface exposure of phosphatidylserine and loss of membrane asymmetry, which leads to loss of infectivity. The sequence is that of Serine incorporator 3 (Serinc3) from Mus musculus (Mouse).